We begin with the raw amino-acid sequence, 628 residues long: Beta-galactosidase large subunit (628 aa).

Residue Glu468 is the Proton donor of the active site. Glu536 serves as the catalytic Nucleophile.

The protein belongs to the glycosyl hydrolase 2 family. In terms of assembly, heterodimer of a large (LacL) and a small subunit (LacM).

The catalysed reaction is Hydrolysis of terminal non-reducing beta-D-galactose residues in beta-D-galactosides.. Component of a beta-galactosidase. This Lactobacillus acidophilus (strain ATCC 700396 / NCK56 / N2 / NCFM) protein is Beta-galactosidase large subunit (lacL).